Reading from the N-terminus, the 102-residue chain is Small ribosomal subunit protein uS10 (102 aa).

This sequence belongs to the universal ribosomal protein uS10 family. As to quaternary structure, part of the 30S ribosomal subunit.

Involved in the binding of tRNA to the ribosomes. This Clostridium botulinum (strain ATCC 19397 / Type A) protein is Small ribosomal subunit protein uS10.